Reading from the N-terminus, the 655-residue chain is Protein-glucosylgalactosylhydroxylysine glucosidase (655 aa).

258 to 259 (WD) contacts substrate. The Proton donor role is filled by E388. 456–457 (KQ) lines the substrate pocket.

It belongs to the glycosyl hydrolase 65 family.

The enzyme catalyses (5R)-5-O-[alpha-D-glucosyl-(1-&gt;2)-beta-D-galactosyl]-5-hydroxy-L-lysyl-[collagen] + H2O = (5R)-5-O-(beta-D-galactosyl)-5-hydroxy-L-lysyl-[collagen] + D-glucose. Catalyzes the hydrolysis of glucose from the disaccharide unit linked to hydroxylysine residues of collagen and collagen-like proteins. The polypeptide is Protein-glucosylgalactosylhydroxylysine glucosidase (Danio rerio (Zebrafish)).